The sequence spans 436 residues: 3-ketoacyl-CoA thiolase (436 aa).

Cys99 (acyl-thioester intermediate) is an active-site residue. Catalysis depends on proton acceptor residues His392 and Cys422.

The protein belongs to the thiolase-like superfamily. Thiolase family. Heterotetramer of two alpha chains (FadJ) and two beta chains (FadI).

It localises to the cytoplasm. It carries out the reaction an acyl-CoA + acetyl-CoA = a 3-oxoacyl-CoA + CoA. It functions in the pathway lipid metabolism; fatty acid beta-oxidation. Catalyzes the final step of fatty acid oxidation in which acetyl-CoA is released and the CoA ester of a fatty acid two carbons shorter is formed. This chain is 3-ketoacyl-CoA thiolase, found in Shewanella frigidimarina (strain NCIMB 400).